A 376-amino-acid chain; its full sequence is Phytanoyl-CoA hydroxylase-interacting protein-like (376 aa).

Phosphoserine is present on residues Ser12 and Ser15. Residue Asn23 is glycosylated (N-linked (GlcNAc...) asparagine). A Phosphoserine modification is found at Ser25. Asn37 carries an N-linked (GlcNAc...) asparagine glycan. Residues 52–161 (VPHNIKISNI…EIIEFCTADY (110 aa)) form the Fibronectin type-III domain.

The protein belongs to the PHYHIP family.

Its function is as follows. May play a role in the development of the central system. The chain is Phytanoyl-CoA hydroxylase-interacting protein-like (PHYHIPL) from Homo sapiens (Human).